Here is a 147-residue protein sequence, read N- to C-terminus: D-aminoacyl-tRNA deacylase (147 aa).

Positions 136 to 137 (GP) match the Gly-cisPro motif, important for rejection of L-amino acids motif.

The protein belongs to the DTD family. Homodimer.

Its subcellular location is the cytoplasm. It catalyses the reaction glycyl-tRNA(Ala) + H2O = tRNA(Ala) + glycine + H(+). The enzyme catalyses a D-aminoacyl-tRNA + H2O = a tRNA + a D-alpha-amino acid + H(+). An aminoacyl-tRNA editing enzyme that deacylates mischarged D-aminoacyl-tRNAs. Also deacylates mischarged glycyl-tRNA(Ala), protecting cells against glycine mischarging by AlaRS. Acts via tRNA-based rather than protein-based catalysis; rejects L-amino acids rather than detecting D-amino acids in the active site. By recycling D-aminoacyl-tRNA to D-amino acids and free tRNA molecules, this enzyme counteracts the toxicity associated with the formation of D-aminoacyl-tRNA entities in vivo and helps enforce protein L-homochirality. The sequence is that of D-aminoacyl-tRNA deacylase from Streptococcus pneumoniae (strain P1031).